The primary structure comprises 318 residues: Taste receptor type 2 member 60 (318 aa).

Over 1–7 (MNGDHMV) the chain is Extracellular. Residues 8 to 28 (LGSSMTDEKAIILVIILLLLC) form a helical membrane-spanning segment. Residues 29–40 (LVAIAGNCFITA) are Cytoplasmic-facing. A helical transmembrane segment spans residues 41-61 (ALGMEWVLQRMLLPCDKLLVS). The Extracellular segment spans residues 62–88 (LGASRFCPQWVVMGKTTYVFLYPTAFP). The helical transmembrane segment at 89–109 (YNPVLRFLAFQWDLLNAATLW) threads the bilayer. The Cytoplasmic portion of the chain corresponds to 110–128 (FSTWLSVFYCVKIATFTHP). The helical transmembrane segment at 129-149 (VFLWLKHKLSEWVPWMLFSSV) threads the bilayer. The Extracellular portion of the chain corresponds to 150-183 (GLSSFTTILFFIGNHRVYQSYLRNHLQPWNVTGN). A glycan (N-linked (GlcNAc...) asparagine) is linked at N179. Residues 184-204 (SIWSYCEKFYLFPLKMITWTM) form a helical membrane-spanning segment. The Cytoplasmic portion of the chain corresponds to 205 to 234 (PTAVFFICMILLITSLGRHMKKALLTNSGF). The helical transmembrane segment at 235–255 (RDPSVQAHIKAMLALLSFAML) threads the bilayer. Residues 256-264 (FISYFLSLV) are Extracellular-facing. Residues 265–285 (FSAAGIFPPLDFKFWVWESVI) form a helical membrane-spanning segment. Over 286 to 318 (YLCAAVHPIILLFSNRRLRAVLKRCRSSRCGTP) the chain is Cytoplasmic.

Belongs to the G-protein coupled receptor T2R family.

Its subcellular location is the membrane. Its function is as follows. Receptor that may play a role in the perception of bitterness and is gustducin-linked. May play a role in sensing the chemical composition of the gastrointestinal content. The activity of this receptor may stimulate alpha gustducin, mediate PLC-beta-2 activation and lead to the gating of TRPM5. The protein is Taste receptor type 2 member 60 (TAS2R60) of Pongo pygmaeus (Bornean orangutan).